The sequence spans 91 residues: Large ribosomal subunit protein uL23c (91 aa).

This sequence belongs to the universal ribosomal protein uL23 family. As to quaternary structure, part of the 50S ribosomal subunit.

It is found in the plastid. It localises to the chloroplast. In terms of biological role, binds to 23S rRNA. The sequence is that of Large ribosomal subunit protein uL23c (rpl23) from Huperzia lucidula (Shining clubmoss).